Reading from the N-terminus, the 106-residue chain is UPF0642 protein YBL028C (106 aa).

The span at 1–12 (MAKSLRASSHLN) shows a compositional bias: polar residues. Disordered regions lie at residues 1–21 (MAKSLRASSHLNAKSVKRRGV) and 52–106 (KEEQ…FTRF). The span at 62 to 72 (DEKKSNEEAPR) shows a compositional bias: basic and acidic residues. The segment covering 83–106 (GRHHTYKKAKLMKQSKKKTSFTRF) has biased composition (basic residues).

It belongs to the UPF0642 family.

This Saccharomyces cerevisiae (strain ATCC 204508 / S288c) (Baker's yeast) protein is UPF0642 protein YBL028C.